Reading from the N-terminus, the 254-residue chain is Thiazole synthase (254 aa).

Catalysis depends on Lys96, which acts as the Schiff-base intermediate with DXP. Residues Gly157, 183-184, and 205-206 each bind 1-deoxy-D-xylulose 5-phosphate; these read AG and NT.

This sequence belongs to the ThiG family. Homotetramer. Forms heterodimers with either ThiH or ThiS.

It localises to the cytoplasm. The enzyme catalyses [ThiS sulfur-carrier protein]-C-terminal-Gly-aminoethanethioate + 2-iminoacetate + 1-deoxy-D-xylulose 5-phosphate = [ThiS sulfur-carrier protein]-C-terminal Gly-Gly + 2-[(2R,5Z)-2-carboxy-4-methylthiazol-5(2H)-ylidene]ethyl phosphate + 2 H2O + H(+). Its pathway is cofactor biosynthesis; thiamine diphosphate biosynthesis. Catalyzes the rearrangement of 1-deoxy-D-xylulose 5-phosphate (DXP) to produce the thiazole phosphate moiety of thiamine. Sulfur is provided by the thiocarboxylate moiety of the carrier protein ThiS. In vitro, sulfur can be provided by H(2)S. The protein is Thiazole synthase of Bacillus velezensis (strain DSM 23117 / BGSC 10A6 / LMG 26770 / FZB42) (Bacillus amyloliquefaciens subsp. plantarum).